Reading from the N-terminus, the 342-residue chain is Cathepsin B-like cysteine proteinase (342 aa).

The N-terminal stretch at 1 to 17 (MLKIAVYIVSLFTFLEA) is a signal peptide. Positions 18 to 89 (HVTTRNNQRI…TVDHHDLNVE (72 aa)) are cleaved as a propeptide — activation peptide. 6 cysteine pairs are disulfide-bonded: Cys103-Cys132, Cys115-Cys159, Cys151-Cys217, Cys152-Cys155, Cys188-Cys221, and Cys196-Cys207. The active site involves Cys118. Active-site residues include His288 and Asn308.

This sequence belongs to the peptidase C1 family. In terms of tissue distribution, intestine (gut).

Thiol protease. Has a role as a digestive enzyme. The protein is Cathepsin B-like cysteine proteinase (CATB) of Schistosoma japonicum (Blood fluke).